Reading from the N-terminus, the 83-residue chain is Cytochrome b559 subunit alpha (83 aa).

Residues 21 to 35 form a helical membrane-spanning segment; sequence VIHSITIPSLFIAGW. His23 is a heme binding site.

Belongs to the PsbE/PsbF family. In terms of assembly, heterodimer of an alpha subunit and a beta subunit. PSII is composed of 1 copy each of membrane proteins PsbA, PsbB, PsbC, PsbD, PsbE, PsbF, PsbH, PsbI, PsbJ, PsbK, PsbL, PsbM, PsbT, PsbX, PsbY, PsbZ, Psb30/Ycf12, at least 3 peripheral proteins of the oxygen-evolving complex and a large number of cofactors. It forms dimeric complexes. Requires heme b as cofactor.

It localises to the plastid. The protein resides in the chloroplast thylakoid membrane. In terms of biological role, this b-type cytochrome is tightly associated with the reaction center of photosystem II (PSII). PSII is a light-driven water:plastoquinone oxidoreductase that uses light energy to abstract electrons from H(2)O, generating O(2) and a proton gradient subsequently used for ATP formation. It consists of a core antenna complex that captures photons, and an electron transfer chain that converts photonic excitation into a charge separation. The chain is Cytochrome b559 subunit alpha from Helianthus annuus (Common sunflower).